We begin with the raw amino-acid sequence, 81 residues long: Photosystem I iron-sulfur center (81 aa).

4Fe-4S ferredoxin-type domains lie at 2 to 31 (SHTV…MVPW) and 37 to 68 (GQIA…VRVY). Residues C11, C14, C17, C21, C48, C51, C54, and C58 each contribute to the [4Fe-4S] cluster site.

In terms of assembly, the eukaryotic PSI reaction center is composed of at least 11 subunits. [4Fe-4S] cluster is required as a cofactor.

It is found in the plastid. It localises to the chloroplast thylakoid membrane. The enzyme catalyses reduced [plastocyanin] + hnu + oxidized [2Fe-2S]-[ferredoxin] = oxidized [plastocyanin] + reduced [2Fe-2S]-[ferredoxin]. Its function is as follows. Apoprotein for the two 4Fe-4S centers FA and FB of photosystem I (PSI); essential for photochemical activity. FB is the terminal electron acceptor of PSI, donating electrons to ferredoxin. The C-terminus interacts with PsaA/B/D and helps assemble the protein into the PSI complex. Required for binding of PsaD and PsaE to PSI. PSI is a plastocyanin/cytochrome c6-ferredoxin oxidoreductase, converting photonic excitation into a charge separation, which transfers an electron from the donor P700 chlorophyll pair to the spectroscopically characterized acceptors A0, A1, FX, FA and FB in turn. This is Photosystem I iron-sulfur center from Thalassiosira pseudonana (Marine diatom).